A 360-amino-acid chain; its full sequence is UDP-N-acetylglucosamine--N-acetylmuramyl-(pentapeptide) pyrophosphoryl-undecaprenol N-acetylglucosamine transferase (360 aa).

Serine 198 and glutamine 289 together coordinate UDP-N-acetyl-alpha-D-glucosamine.

This sequence belongs to the glycosyltransferase 28 family. MurG subfamily.

It localises to the cell membrane. The enzyme catalyses Mur2Ac(oyl-L-Ala-gamma-D-Glu-L-Lys-D-Ala-D-Ala)-di-trans,octa-cis-undecaprenyl diphosphate + UDP-N-acetyl-alpha-D-glucosamine = beta-D-GlcNAc-(1-&gt;4)-Mur2Ac(oyl-L-Ala-gamma-D-Glu-L-Lys-D-Ala-D-Ala)-di-trans,octa-cis-undecaprenyl diphosphate + UDP + H(+). Its pathway is cell wall biogenesis; peptidoglycan biosynthesis. Cell wall formation. Catalyzes the transfer of a GlcNAc subunit on undecaprenyl-pyrophosphoryl-MurNAc-pentapeptide (lipid intermediate I) to form undecaprenyl-pyrophosphoryl-MurNAc-(pentapeptide)GlcNAc (lipid intermediate II). The chain is UDP-N-acetylglucosamine--N-acetylmuramyl-(pentapeptide) pyrophosphoryl-undecaprenol N-acetylglucosamine transferase from Streptococcus pyogenes serotype M3 (strain SSI-1).